A 179-amino-acid chain; its full sequence is UPF0302 protein EF_1554 (179 aa).

This sequence belongs to the UPF0302 family.

The sequence is that of UPF0302 protein EF_1554 from Enterococcus faecalis (strain ATCC 700802 / V583).